The following is a 492-amino-acid chain: Protein nucleotidyltransferase YdiU (492 aa).

G95, G97, R98, K118, D130, G131, R181, and R188 together coordinate ATP. D257 (proton acceptor) is an active-site residue. Positions 258 and 267 each coordinate Mg(2+). D267 serves as a coordination point for ATP. The segment covering 466 to 475 (YDDQPEHAEY) has biased composition (basic and acidic residues). Residues 466-492 (YDDQPEHAEYRQPPPPSEKPYQTFCGT) form a disordered region.

It belongs to the SELO family. Mg(2+) is required as a cofactor. The cofactor is Mn(2+).

The catalysed reaction is L-seryl-[protein] + ATP = 3-O-(5'-adenylyl)-L-seryl-[protein] + diphosphate. It carries out the reaction L-threonyl-[protein] + ATP = 3-O-(5'-adenylyl)-L-threonyl-[protein] + diphosphate. The enzyme catalyses L-tyrosyl-[protein] + ATP = O-(5'-adenylyl)-L-tyrosyl-[protein] + diphosphate. It catalyses the reaction L-histidyl-[protein] + UTP = N(tele)-(5'-uridylyl)-L-histidyl-[protein] + diphosphate. The catalysed reaction is L-seryl-[protein] + UTP = O-(5'-uridylyl)-L-seryl-[protein] + diphosphate. It carries out the reaction L-tyrosyl-[protein] + UTP = O-(5'-uridylyl)-L-tyrosyl-[protein] + diphosphate. Functionally, nucleotidyltransferase involved in the post-translational modification of proteins. It can catalyze the addition of adenosine monophosphate (AMP) or uridine monophosphate (UMP) to a protein, resulting in modifications known as AMPylation and UMPylation. The polypeptide is Protein nucleotidyltransferase YdiU (Syntrophotalea carbinolica (strain DSM 2380 / NBRC 103641 / GraBd1) (Pelobacter carbinolicus)).